Reading from the N-terminus, the 49-residue chain is Large ribosomal subunit protein bL33B (49 aa).

Belongs to the bacterial ribosomal protein bL33 family.

This Lactococcus lactis subsp. cremoris (Streptococcus cremoris) protein is Large ribosomal subunit protein bL33B (rpmG2).